We begin with the raw amino-acid sequence, 369 residues long: Phospho-N-acetylmuramoyl-pentapeptide-transferase (369 aa).

The next 10 membrane-spanning stretches (helical) occupy residues 3-23 (ALLFAGAFSLAFTLFLTPLFI), 53-73 (GGIVIILASVLGYFVGHLLTW), 81-101 (VTPSGLLVVFMMVGLGFVGFL), 118-138 (WQKIAGQVVVATVFAVLAITL), 162-182 (FMALGAVIGTGLFIVWICLIV), 198-218 (LAAGASIFSIGSYVIIGFWQF), 240-260 (PLDLAIIAASIVGALIGFLWW), 267-287 (IFMGDTGSLGLGGALAALAIL), 290-310 (TELLLVFIGGLFVIVAGSVVL), and 347-367 (FWIIAGLLVAAGVGTFYLEWI).

It belongs to the glycosyltransferase 4 family. MraY subfamily. Mg(2+) serves as cofactor.

The protein localises to the cell membrane. The catalysed reaction is UDP-N-acetyl-alpha-D-muramoyl-L-alanyl-gamma-D-glutamyl-meso-2,6-diaminopimeloyl-D-alanyl-D-alanine + di-trans,octa-cis-undecaprenyl phosphate = di-trans,octa-cis-undecaprenyl diphospho-N-acetyl-alpha-D-muramoyl-L-alanyl-D-glutamyl-meso-2,6-diaminopimeloyl-D-alanyl-D-alanine + UMP. It participates in cell wall biogenesis; peptidoglycan biosynthesis. Functionally, catalyzes the initial step of the lipid cycle reactions in the biosynthesis of the cell wall peptidoglycan: transfers peptidoglycan precursor phospho-MurNAc-pentapeptide from UDP-MurNAc-pentapeptide onto the lipid carrier undecaprenyl phosphate, yielding undecaprenyl-pyrophosphoryl-MurNAc-pentapeptide, known as lipid I. In Clavibacter michiganensis subsp. michiganensis (strain NCPPB 382), this protein is Phospho-N-acetylmuramoyl-pentapeptide-transferase.